Consider the following 319-residue polypeptide: HPr kinase/phosphorylase (319 aa).

Active-site residues include H140 and K161. Residue 155 to 162 (GDSGVGKS) participates in ATP binding. S162 serves as a coordination point for Mg(2+). The active-site Proton acceptor; for phosphorylation activity. Proton donor; for dephosphorylation activity is D179. The important for the catalytic mechanism of both phosphorylation and dephosphorylation stretch occupies residues 203-212 (LEIRGLGIID). E204 contacts Mg(2+). Residue R245 is part of the active site. The segment at 266-271 (PVKVGR) is important for the catalytic mechanism of dephosphorylation.

This sequence belongs to the HPrK/P family. In terms of assembly, homohexamer, arranged as bilayered trimers. Six HPr molecules bind to the hexamer at sites that overlap two of its subunits. Requires Mg(2+) as cofactor.

The enzyme catalyses [HPr protein]-L-serine + ATP = [HPr protein]-O-phospho-L-serine + ADP + H(+). It catalyses the reaction [HPr protein]-O-phospho-L-serine + phosphate + H(+) = [HPr protein]-L-serine + diphosphate. Kinase activity is slightly activated by fructose 1,6-bisphosphate (FBP), and inhibited by inorganic phosphate (Pi), but FBP prevents kinase inhibition by Pi. Dephosphorylation of P-Ser-HPr is slightly inhibited by FBP. Catalyzes the ATP- as well as the pyrophosphate-dependent phosphorylation of 'Ser-46' in HPr, a phosphocarrier protein of the phosphoenolpyruvate-dependent sugar phosphotransferase system (PTS). HprK/P also catalyzes the pyrophosphate-producing, inorganic phosphate-dependent dephosphorylation (phosphorolysis) of seryl-phosphorylated HPr (P-Ser-HPr). The two antagonistic activities of HprK/P are regulated by several intracellular metabolites, which change their concentration in response to the absence or presence of rapidly metabolisable carbon sources (glucose, fructose, etc.) in the growth medium. Therefore, by controlling the phosphorylation state of HPr, HPrK/P is a sensor enzyme that plays a major role in the regulation of carbon metabolism and sugar transport: it mediates carbon catabolite repression (CCR), and regulates PTS-catalyzed carbohydrate uptake and inducer exclusion. The protein is HPr kinase/phosphorylase (hprK) of Lacticaseibacillus casei (Lactobacillus casei).